Reading from the N-terminus, the 220-residue chain is Uracil-DNA glycosylase (220 aa).

Aspartate 65 (proton acceptor) is an active-site residue.

This sequence belongs to the uracil-DNA glycosylase (UDG) superfamily. UNG family.

The protein resides in the cytoplasm. It catalyses the reaction Hydrolyzes single-stranded DNA or mismatched double-stranded DNA and polynucleotides, releasing free uracil.. Functionally, excises uracil residues from the DNA which can arise as a result of misincorporation of dUMP residues by DNA polymerase or due to deamination of cytosine. The chain is Uracil-DNA glycosylase from Phocaeicola vulgatus (strain ATCC 8482 / DSM 1447 / JCM 5826 / CCUG 4940 / NBRC 14291 / NCTC 11154) (Bacteroides vulgatus).